The sequence spans 207 residues: Small ribosomal subunit protein uS4 (207 aa).

A disordered region spans residues 30-54; that stretch reads DKCKLDSKPGQHGRTSGARTSDYGN. The span at 42 to 53 shows a compositional bias: polar residues; that stretch reads GRTSGARTSDYG. The region spanning 97–160 is the S4 RNA-binding domain; that stretch reads SRLDNVVYRM…KKQVRIAEAL (64 aa).

Belongs to the universal ribosomal protein uS4 family. In terms of assembly, part of the 30S ribosomal subunit. Contacts protein S5. The interaction surface between S4 and S5 is involved in control of translational fidelity.

Its function is as follows. One of the primary rRNA binding proteins, it binds directly to 16S rRNA where it nucleates assembly of the body of the 30S subunit. Functionally, with S5 and S12 plays an important role in translational accuracy. This is Small ribosomal subunit protein uS4 from Cupriavidus taiwanensis (strain DSM 17343 / BCRC 17206 / CCUG 44338 / CIP 107171 / LMG 19424 / R1) (Ralstonia taiwanensis (strain LMG 19424)).